Reading from the N-terminus, the 426-residue chain is Lactate racemase (426 aa).

Residue 72 to 75 (DHTR) participates in Ni(II)-pyridinium-3,5-bisthiocarboxylate mononucleotide binding. Active-site proton donor/acceptor residues include His-108 and His-174. Ni(II)-pyridinium-3,5-bisthiocarboxylate mononucleotide contacts are provided by Lys-184 and His-200. The substrate site is built by Gln-295 and Lys-298.

This sequence belongs to the lactate racemase family. In terms of assembly, homodimer. The cofactor is Ni(II)-pyridinium-3,5-bisthiocarboxylate mononucleotide.

It catalyses the reaction (S)-lactate = (R)-lactate. Its activity is regulated as follows. Activation of the apo-enzyme requires the three accessory proteins LarB, LarE and LarC, that are involved in the biosynthesis of the nickel-pincer cofactor of LarA. In terms of biological role, catalyzes the interconversion between the D- and L-isomers of lactate. The protein is Lactate racemase of Thermoanaerobacterium thermosaccharolyticum (strain ATCC 7956 / DSM 571 / NCIMB 9385 / NCA 3814 / NCTC 13789 / WDCM 00135 / 2032) (Clostridium thermosaccharolyticum).